A 217-amino-acid chain; its full sequence is UDP-N-acetylglucosamine transferase subunit ALG14 (217 aa).

The Lumenal portion of the chain corresponds to 1–3 (MLS). The helical transmembrane segment at 4 to 26 (ILILAATAAGLVILLFQRLWTVL) threads the bilayer. Residues 27–217 (GPHHVTPRES…PKSVYLGRIV (191 aa)) are Cytoplasmic-facing.

This sequence belongs to the ALG14 family. As to quaternary structure, forms with ALG13 the active heterodimeric UDP-N-acetylglucosamine transferase complex.

The protein localises to the endoplasmic reticulum membrane. Its function is as follows. Part of the UDP-N-acetylglucosamine transferase complex that operates in the biosynthetic pathway of dolichol-linked oligosaccharides, the glycan precursors employed in protein asparagine (N)-glycosylation. The assembly of dolichol-linked oligosaccharides begins on the cytosolic side of the endoplasmic reticulum membrane and finishes in its lumen. The sequential addition of sugars to dolichol pyrophosphate produces dolichol-linked oligosaccharides containing fourteen sugars, including two GlcNAcs, nine mannoses and three glucoses. Once assembled, the oligosaccharides are transferred from the lipid to nascent proteins by oligosaccharyltransferases. Functions as a protein-membrane adapter recruiting ALG13 at the cytoplasmic face of the endoplasmic reticulum, where the complex catalyzes the second step of dolichol pyrophosphate biosynthesis, transferring a beta1,4-linked N-acetylglucosamine (GlcNAc) from UDP-GlcNAc to GlcNAc-pyrophosphatedolichol (Gn-PDol) to produce N,N'-diacetylchitobiosyl diphosphodolichol. N,N'-diacetylchitobiosyl diphosphodolichol is a substrate for ALG1, the following enzyme in the biosynthetic pathway. This Mus musculus (Mouse) protein is UDP-N-acetylglucosamine transferase subunit ALG14.